Consider the following 744-residue polypeptide: TonB-dependent heme receptor A (744 aa).

An N-terminal signal peptide occupies residues 1–24; that stretch reads MNILINKRIFLLVTLVGIQLNVTA. The region spanning 45–157 is the TBDR plug domain; the sequence is DDSNKLPGRS…FAGTVKFETK (113 aa). In terms of domain architecture, TBDR beta-barrel spans 168–744; it reads KIGGFLKYGN…NIKFSLSQKF (577 aa).

Belongs to the TonB-dependent receptor family.

The protein localises to the cell outer membrane. In terms of biological role, heme receptor. This is TonB-dependent heme receptor A (tdhA) from Haemophilus influenzae (strain ATCC 51907 / DSM 11121 / KW20 / Rd).